The following is a 357-amino-acid chain: Probable xyloglucan endotransglucosylase/hydrolase protein 29 (357 aa).

Positions 1–31 (MRDSIYLLWIDNRLVVIIMMVMMVSCRCVLG) are cleaved as a signal peptide. The 201-residue stretch at 32-232 (LENINPIFFD…YTFSPFVSEF (201 aa)) folds into the GH16 domain. The active-site Nucleophile is the glutamate 117. The active-site Proton donor is glutamate 121. Xyloglucan contacts are provided by residues glutamate 121 and 134-136 (QTN). N-linked (GlcNAc...) asparagine glycosylation occurs at asparagine 140. Residues 144–148 (NRGRE), 211–212 (SW), and glycine 216 each bind xyloglucan. Residues asparagine 241 and asparagine 262 are each glycosylated (N-linked (GlcNAc...) asparagine). Cysteine 299 and cysteine 312 form a disulfide bridge. Arginine 304 serves as a coordination point for xyloglucan. Residues 326–357 (GRLKFGGSHPKVHKARKKRRRNRSTPVVSADL) are disordered. Residues 335-348 (PKVHKARKKRRRNR) are compositionally biased toward basic residues. Residue asparagine 347 is glycosylated (N-linked (GlcNAc...) asparagine).

The protein belongs to the glycosyl hydrolase 16 family. XTH group 3 subfamily. In terms of processing, contains at least one intrachain disulfide bond essential for its enzymatic activity.

The protein resides in the secreted. It localises to the cell wall. It is found in the extracellular space. The protein localises to the apoplast. It carries out the reaction breaks a beta-(1-&gt;4) bond in the backbone of a xyloglucan and transfers the xyloglucanyl segment on to O-4 of the non-reducing terminal glucose residue of an acceptor, which can be a xyloglucan or an oligosaccharide of xyloglucan.. In terms of biological role, catalyzes xyloglucan endohydrolysis (XEH) and/or endotransglycosylation (XET). Cleaves and religates xyloglucan polymers, an essential constituent of the primary cell wall, and thereby participates in cell wall construction of growing tissues. This is Probable xyloglucan endotransglucosylase/hydrolase protein 29 (XTH29) from Arabidopsis thaliana (Mouse-ear cress).